Here is a 558-residue protein sequence, read N- to C-terminus: Adenine deaminase (558 aa).

Belongs to the metallo-dependent hydrolases superfamily. Adenine deaminase family. The cofactor is Mn(2+).

The catalysed reaction is adenine + H2O + H(+) = hypoxanthine + NH4(+). This Deinococcus deserti (strain DSM 17065 / CIP 109153 / LMG 22923 / VCD115) protein is Adenine deaminase.